Reading from the N-terminus, the 159-residue chain is Ribosomal RNA large subunit methyltransferase H (159 aa).

S-adenosyl-L-methionine-binding positions include leucine 76, glycine 108, and 127-132 (FGLLTL).

Belongs to the RNA methyltransferase RlmH family. Homodimer.

The protein resides in the cytoplasm. The catalysed reaction is pseudouridine(1915) in 23S rRNA + S-adenosyl-L-methionine = N(3)-methylpseudouridine(1915) in 23S rRNA + S-adenosyl-L-homocysteine + H(+). Its function is as follows. Specifically methylates the pseudouridine at position 1915 (m3Psi1915) in 23S rRNA. The sequence is that of Ribosomal RNA large subunit methyltransferase H from Streptococcus agalactiae serotype Ia (strain ATCC 27591 / A909 / CDC SS700).